A 119-amino-acid polypeptide reads, in one-letter code: MPAVFMLASSSALQCGRGVPRFPRTEVGAGHSVNEETKAEKVGNQTSVIPATSRQAALGTSWTQRRTQPLQERSHWHPRGNNASGMGGHRMFPGPLRGPAAQVLENECGSLGRAAEGRS.

The first 18 residues, 1–18, serve as a signal peptide directing secretion; it reads MPAVFMLASSSALQCGRG. Residues 23 to 100 form a disordered region; it reads PRTEVGAGHS…MFPGPLRGPA (78 aa). The segment covering 43–71 has biased composition (polar residues); sequence GNQTSVIPATSRQAALGTSWTQRRTQPLQ. A glycan (N-linked (GlcNAc...) asparagine) is linked at N44.

Its subcellular location is the secreted. This is an uncharacterized protein from Homo sapiens (Human).